The following is a 615-amino-acid chain: Aldehyde oxidase GLOX1 (615 aa).

The signal sequence occupies residues 1 to 25 (MKKSTRLLWLLSIIVLVAAVSKAVA). Asparagine 35 carries N-linked (GlcNAc...) asparagine glycosylation. The segment at 70 to 89 (PPKAGKGKGKGKGRGTVAAG) is disordered. Residues 72–82 (KAGKGKGKGKG) are compositionally biased toward basic residues. Asparagine 187 and asparagine 297 each carry an N-linked (GlcNAc...) asparagine glycan.

The protein resides in the secreted. The catalysed reaction is an aldehyde + O2 + H2O = a carboxylate + H2O2 + H(+). Functionally, catalyzes the oxidation of aldehydes to the corresponding carboxylate by coupling the reaction to the reduction of dioxygen to hydrogen peroxide. Substrates include glyoxal and other aldehydes. May be regulated by the transcription factor MYB80 during anther development and play a role in tapetum and pollen development. The sequence is that of Aldehyde oxidase GLOX1 from Arabidopsis thaliana (Mouse-ear cress).